We begin with the raw amino-acid sequence, 88 residues long: MSKLFFVAFLCLIISVFATTPDEIGCTDISQAEFDEKNANCIKCGEEGFGEEMVKRCRNKCFTDNFYQSCVDQLNGVYEEKDTPPVKE.

The signal sequence occupies residues 1-18 (MSKLFFVAFLCLIISVFA).

Belongs to the arthropod CHH/MIH/GIH/VIH hormone family. Expressed by the venom gland.

The protein localises to the secreted. May increase the toxicity of alpha-latrotoxin and/or other venom components. Is non-toxic to mice and to the cockroach Periplaneta americana. This chain is Alpha-latrotoxin associated low molecular weight protein, found in Latrodectus hesperus (Western black widow spider).